Consider the following 315-residue polypeptide: Ribonuclease Z (315 aa).

Positions 61, 63, 65, 66, 151, 219, and 278 each coordinate Zn(2+). Aspartate 65 serves as the catalytic Proton acceptor.

This sequence belongs to the RNase Z family. Homodimer. It depends on Zn(2+) as a cofactor.

The catalysed reaction is Endonucleolytic cleavage of RNA, removing extra 3' nucleotides from tRNA precursor, generating 3' termini of tRNAs. A 3'-hydroxy group is left at the tRNA terminus and a 5'-phosphoryl group is left at the trailer molecule.. Functionally, zinc phosphodiesterase, which displays some tRNA 3'-processing endonuclease activity. Probably involved in tRNA maturation, by removing a 3'-trailer from precursor tRNA. This Clostridium botulinum (strain Alaska E43 / Type E3) protein is Ribonuclease Z.